A 176-amino-acid chain; its full sequence is Cytochrome c-552 (176 aa).

Residues G12–F32 form a helical; Signal-anchor membrane-spanning segment. Heme c contacts are provided by C90, C93, H94, M126, and M154.

Binds 1 heme c group covalently per subunit.

The protein resides in the cell membrane. Mediates the electron transport between the cytochrome bc1 complex and cytochrome-c oxidase. The chain is Cytochrome c-552 (cycM) from Paracoccus denitrificans.